A 331-amino-acid polypeptide reads, in one-letter code: Ribosomal RNA small subunit methyltransferase H (331 aa).

Residues 38-40 (GGY), Asp56, Phe83, Asp100, and Gln107 each bind S-adenosyl-L-methionine. The interval 289–331 (AELAENPRARSARLRVGVRTDAPAGKVDPQALGTPLIPKKGRR) is disordered.

The protein belongs to the methyltransferase superfamily. RsmH family.

It is found in the cytoplasm. It catalyses the reaction cytidine(1402) in 16S rRNA + S-adenosyl-L-methionine = N(4)-methylcytidine(1402) in 16S rRNA + S-adenosyl-L-homocysteine + H(+). In terms of biological role, specifically methylates the N4 position of cytidine in position 1402 (C1402) of 16S rRNA. This Cereibacter sphaeroides (strain ATCC 17029 / ATH 2.4.9) (Rhodobacter sphaeroides) protein is Ribosomal RNA small subunit methyltransferase H.